The following is a 677-amino-acid chain: Collagen alpha-2(IX) chain (677 aa).

An N-terminal signal peptide occupies residues 1-21 (MAHRSPALCLLLLHAACLCLA). Residues 25 to 161 (GPPGEPGPRG…PGKPGPPGHI (137 aa)) are triple-helical region 4 (COL4). Over residues 28–41 (GEPGPRGPPGPPGV) the composition is skewed to pro residues. A disordered region spans residues 28–516 (GEPGPRGPPG…MPGQRGVAGR (489 aa)). Over residues 53–66 (SPGAPGSPGAKGEP) the composition is skewed to low complexity. Residues 68-77 (APGPDGPPGK) are compositionally biased toward pro residues. A compositionally biased stretch (gly residues) spans 91 to 100 (GPWGGQGLKG). Pro residues-rich tracts occupy residues 104–121 (LPGPPGLPGPSLPGPPGL) and 137–158 (KGDPGPDGPRGPPGPPGKPGPP). Proline 158 carries the post-translational modification 4-hydroxyproline. Positions 162–178 (QGVEGSADFLCPTNCPP) are nonhelical region 4 (NC4). Serine 167 carries O-linked (Xyl...) (glycosaminoglycan) serine glycosylation. Residue proline 178 is modified to 4-hydroxyproline. The tract at residues 179–517 (GPKGPQGLQG…PGQRGVAGRD (339 aa)) is triple-helical region 3 (COL3). Lysine 181 carries the post-translational modification 5-hydroxylysine. Lysine 181 carries O-linked (Gal...) hydroxylysine glycosylation. Lysine 190 carries the allysine modification. Low complexity-rich tracts occupy residues 363–382 (TPGLDGEPGPPGDAGTAGVP), 430–442 (PGKTGPKGSTGDP), and 496–505 (RGLLGERGVP). Positions 518 to 547 (AGDQHIIDVVLKMMQEQLAEVAVSAKRAAL) are nonhelical region 3 (NC3). Residues 548–630 (GGVGAMGPPG…PGLPGIPGHA (83 aa)) form a triple-helical region 2 (COL2) region. The segment at 550-657 (VGAMGPPGPP…GRPGSPGPAG (108 aa)) is disordered. Pro residues predominate over residues 555–565 (PPGPPGPPGPP). Over residues 597-609 (KRGEKGERGDTGR) the composition is skewed to basic and acidic residues. The nonhelical region 2 (NC2) stretch occupies residues 631–632 (LA). Residues 633–662 (GKDGERGPPGVPGDAGRPGSPGPAGLPGFC) are triple-helical region 1 (COL1). A nonhelical region 1 (NC1) region spans residues 663 to 677 (EPAACLGALPTPRHG).

The protein belongs to the fibril-associated collagens with interrupted helices (FACIT) family. In terms of assembly, heterotrimer of an alpha 1(IX), an alpha 2(IX) and an alpha 3(IX) chain. The chains are linked to each other by interchain disulfide bonds. Trimers are also cross-linked via hydroxylysines. Covalently linked to the telopeptides of type II collagen by lysine-derived cross-links. Post-translationally, prolines at the third position of the tripeptide repeating unit (G-X-Y) are hydroxylated in some or all of the chains.

It is found in the secreted. The protein localises to the extracellular space. The protein resides in the extracellular matrix. Structural component of hyaline cartilage and vitreous of the eye. The polypeptide is Collagen alpha-2(IX) chain (COL9A2) (Gallus gallus (Chicken)).